A 634-amino-acid polypeptide reads, in one-letter code: Chaperone protein HtpG (634 aa).

The tract at residues 1–344 (MSETATQNKE…SNDLPLNVSR (344 aa)) is a; substrate-binding. Residues 345–561 (EILQDNKVTQ…DFEMGTQMAK (217 aa)) form a b region. The tract at residues 562-634 (LLEAAGQAAP…GAINELLTKR (73 aa)) is c.

Belongs to the heat shock protein 90 family. In terms of assembly, homodimer.

The protein localises to the cytoplasm. In terms of biological role, molecular chaperone. Has ATPase activity. The protein is Chaperone protein HtpG of Vibrio atlanticus (strain LGP32) (Vibrio splendidus (strain Mel32)).